A 305-amino-acid polypeptide reads, in one-letter code: MLKQRTIKQIVKTVGIGLHSGRKVNLTLRPAAPDTGIVFCRVDLPTPVDIPASAMAIGDTRLASVLQKDGARVSTIEHLMSACAGLGIDNLYVDVTAEEIPIMDGSAASFVFLIQSAGIEEQNAAKKFIKVTKPVEIRDGDKFARLDPYFGFKLKFTIDFRHPAVDKTGQALEVDFANTSYVREIARARTFGFAHEVEMMRELGLARGGSMDNAIVLDEYRILNNDGLRYDDEFVKHKMLDAIGDLYVVGHPLLAAYDAYKSGHGLNNALLRELLAHEDSYEIVTFDDPLKAPRGFAYDTQTAFA.

Residues H78, H237, and D241 each coordinate Zn(2+). The active-site Proton donor is the H264.

The protein belongs to the LpxC family. Requires Zn(2+) as cofactor.

The enzyme catalyses a UDP-3-O-[(3R)-3-hydroxyacyl]-N-acetyl-alpha-D-glucosamine + H2O = a UDP-3-O-[(3R)-3-hydroxyacyl]-alpha-D-glucosamine + acetate. The protein operates within glycolipid biosynthesis; lipid IV(A) biosynthesis; lipid IV(A) from (3R)-3-hydroxytetradecanoyl-[acyl-carrier-protein] and UDP-N-acetyl-alpha-D-glucosamine: step 2/6. In terms of biological role, catalyzes the hydrolysis of UDP-3-O-myristoyl-N-acetylglucosamine to form UDP-3-O-myristoylglucosamine and acetate, the committed step in lipid A biosynthesis. The sequence is that of UDP-3-O-acyl-N-acetylglucosamine deacetylase from Paraburkholderia phymatum (strain DSM 17167 / CIP 108236 / LMG 21445 / STM815) (Burkholderia phymatum).